The primary structure comprises 430 residues: Type II methyltransferase M.Sau96I (430 aa).

Residues I9–I63 form the HTH cro/C1-type domain. The SAM-dependent MTase C5-type domain occupies Y99 to F429. Residue C174 is part of the active site.

Belongs to the class I-like SAM-binding methyltransferase superfamily. C5-methyltransferase family.

The enzyme catalyses a 2'-deoxycytidine in DNA + S-adenosyl-L-methionine = a 5-methyl-2'-deoxycytidine in DNA + S-adenosyl-L-homocysteine + H(+). A methylase that recognizes the double-stranded sequence 5'-GGNCC-3', methylates C-4 on both strands, and protects the DNA from cleavage by the Sau96I endonuclease. This Staphylococcus aureus protein is Type II methyltransferase M.Sau96I.